The chain runs to 108 residues: Insulin (108 aa).

An N-terminal signal peptide occupies residues 1–24 (MALWMHLLPLLALLALWGPEPAPA). Disulfide bonds link Cys-31–Cys-94, Cys-43–Cys-107, and Cys-93–Cys-98. A propeptide spans 57 to 85 (EAEDLQVGQVELGGGSITGSLPPLEGPMQ) (c peptide).

It belongs to the insulin family. As to quaternary structure, heterodimer of a B chain and an A chain linked by two disulfide bonds.

The protein localises to the secreted. Insulin decreases blood glucose concentration. It increases cell permeability to monosaccharides, amino acids and fatty acids. It accelerates glycolysis, the pentose phosphate cycle, and glycogen synthesis in liver. The polypeptide is Insulin (INS) (Aotus trivirgatus (Three-striped night monkey)).